The following is a 2009-amino-acid chain: Sodium channel protein type 1 subunit alpha (2009 aa).

The Cytoplasmic segment spans residues 1–128 (MEQTVLVPPG…KIAIKILVHS (128 aa)). Basic and acidic residues predominate over residues 28–48 (RIAEEKAKNPKPDKKDDDENG). The disordered stretch occupies residues 28-60 (RIAEEKAKNPKPDKKDDDENGPKPNSDLEAGKN). The I repeat unit spans residues 110–454 (ILTPFNPLRK…QQMLEQLKKQ (345 aa)). The helical transmembrane segment at 129–146 (LFSMLIMCTILTNCVFMT) threads the bilayer. Over 147 to 152 (MSNPPD) the chain is Extracellular. A helical transmembrane segment spans residues 153 to 177 (WTKNVEYTFTGIYTFESLIKIIARG). Over 178–188 (FCLEDFTFLRD) the chain is Cytoplasmic. Residues 189-205 (PWNWLDFTVITFAYVTE) form a helical membrane-spanning segment. Residues 206 to 213 (FVDLGNVS) lie on the Extracellular side of the membrane. Asn-211 carries N-linked (GlcNAc...) asparagine glycosylation. The chain crosses the membrane as a helical span at residues 214–235 (ALRTFRVLRALKTISVIPGLKT). At 236–245 (IVGALIQSVK) the chain is on the cytoplasmic side. The chain crosses the membrane as a helical span at residues 246–269 (KLSDVMILTVFCLSVFALIGLQLF). The Extracellular portion of the chain corresponds to 270–369 (MGNLRNKCVQ…YGYTSFDTFS (100 aa)). 2 disulfides stabilise this stretch: Cys-277-Cys-345 and Cys-336-Cys-351. N-linked (GlcNAc...) asparagine glycans are attached at residues Asn-284, Asn-295, Asn-301, Asn-306, and Asn-338. An intramembrane region (pore-forming) is located at residues 370-384 (WAFLSLFRLMTQDFW). Topologically, residues 385–397 (ENLYQLTLRAAGK) are extracellular. The chain crosses the membrane as a helical span at residues 398–423 (TYMIFFVLVIFLGSFYLINLILAVVA). Residues 424–768 (MAYEEQNQAT…HIVNLVVMDP (345 aa)) are Cytoplasmic-facing. The interval 458 to 528 (AQQAAAATAS…EFHKSESEDS (71 aa)) is disordered. Ser-470 carries the post-translational modification Phosphoserine. Low complexity predominate over residues 479–492 (LSDSSSEASKLSSK). Basic residues predominate over residues 495–506 (KERRNRRKKRKQ). Over residues 507–528 (KEQSGGEEKDDDEFHKSESEDS) the composition is skewed to basic and acidic residues. A phosphoserine mark is found at Ser-523, Ser-525, Ser-550, Ser-551, Ser-607, and Ser-730. The tract at residues 584–628 (VGSENDFADDEHSTFEDNESRRDSLFVPRRHGERRNSNLSQTSRS) is disordered. Residues 593 to 607 (DEHSTFEDNESRRDS) show a composition bias toward basic and acidic residues. An II repeat occupies 750–1022 (CSPYWLKVKH…QIAVDRMHKG (273 aa)). A helical transmembrane segment spans residues 769–787 (FVDLAITICIVLNTLFMAM). Residues 788–797 (EHYPMTEHFN) lie on the Extracellular side of the membrane. The chain crosses the membrane as a helical span at residues 798-820 (HVLTVGNLVFTGIFTAEMFLKII). Over 821–830 (AMDPYYYFQE) the chain is Cytoplasmic. The helical transmembrane segment at 831-849 (GWNIFDGFIVTLSLVELGL) threads the bilayer. Topologically, residues 850–854 (ANVEG) are extracellular. The helical transmembrane segment at 855–874 (LSVLRSFRLLRVFKLAKSWP) threads the bilayer. The Cytoplasmic segment spans residues 875 to 891 (TLNMLIKIIGNSVGALG). Residues 892–912 (NLTLVLAIIVFIFAVVGMQLF) traverse the membrane as a helical segment. At 913–938 (GKSYKDCVCKIATDCKLPRWHMNDFF) the chain is on the extracellular side. Cys-921 and Cys-927 are joined by a disulfide. Positions 939-952 (HSFLIVFRVLCGEW) form an intramembrane region, pore-forming. The Extracellular segment spans residues 953 to 965 (IETMWDCMEVAGQ). Cys-959 and Cys-968 are joined by a disulfide. The chain crosses the membrane as a helical span at residues 966-992 (AMCLTVFMMVMVIRNLVVLNLFLALLL). At 993-1218 (SSFSADNLAA…RTCFRIVEHN (226 aa)) the chain is on the cytoplasmic side. The interval 1129 to 1163 (TEDFSSESDLEESKEKLNESSSSSEGSTVDIGAPA) is disordered. One copy of the III repeat lies at 1200-1514 (RGKQWWNLRR…KKYYNAMKKL (315 aa)). The helical transmembrane segment at 1219–1237 (WFETFIVFMILLSSGALAF) threads the bilayer. Topologically, residues 1238–1250 (EDIYIDQRKTIKT) are extracellular. A helical membrane pass occupies residues 1251-1276 (MLEYADKVFTYIFILEMLLKWVAYGY). The Cytoplasmic portion of the chain corresponds to 1277 to 1278 (QT). Residues 1279–1304 (YFTNAWCWLDFLIVDVSLVSLTANAL) traverse the membrane as a helical segment. The Extracellular segment spans residues 1305-1313 (GYSELGAIK). Residues 1314–1332 (SLRTLRALRPLRALSRFEG) traverse the membrane as a helical segment. Topologically, residues 1333–1345 (MRVVVNALLGAIP) are cytoplasmic. The helical transmembrane segment at 1346 to 1369 (SIMNVLLVCLIFWLIFSIMGVNLF) threads the bilayer. At 1370–1415 (AGKFYHCVNTTTGDTFEITEVNNHSDCLKLIERNETARWKNVKVNF) the chain is on the extracellular side. Cys-1376 and Cys-1396 are disulfide-bonded. 3 N-linked (GlcNAc...) asparagine glycosylation sites follow: Asn-1378, Asn-1392, and Asn-1403. The segment at residues 1416–1433 (DNVGFGYLSLLQVATFKG) is an intramembrane region (pore-forming). The Extracellular segment spans residues 1434 to 1457 (WMDIMYAAVDSRNVELQPKYEESL). Residues 1458–1483 (YMYLYFVIFIIFGSFFTLNLFIGVII) form a helical membrane-spanning segment. At 1484-1541 (DNFNQQKKKFGGQDIFMTEEQKKYYNAMKKLGSKKPQKPIPRPGNKFQGMVFDFVTRQ) the chain is on the cytoplasmic side. The residue at position 1516 (Ser-1516) is a Phosphoserine; by PKC. An IV repeat occupies 1523-1821 (IPRPGNKFQG…WEKFDPDATQ (299 aa)). The helical transmembrane segment at 1542 to 1560 (VFDISIMILICLNMVTMMV) threads the bilayer. Residues 1561–1571 (ETDDQSDYVTS) are Extracellular-facing. The interval 1561–1571 (ETDDQSDYVTS) is S1-S2 loop of repeat IV. A helical transmembrane segment spans residues 1572 to 1593 (ILSRINLVFIVLFTGECVLKLI). Residues 1594 to 1601 (SLRHYYFT) are Cytoplasmic-facing. A helical membrane pass occupies residues 1602–1623 (IGWNIFDFVVVILSIVGMFLAE). Residues 1619 to 1636 (MFLAELIEKYFVSPTLFR) form an S3b-S4 loop of repeat IV region. Over 1624–1636 (LIEKYFVSPTLFR) the chain is Extracellular. Residues 1637–1655 (VIRLARIGRILRLIKGAKG) traverse the membrane as a helical segment. The Cytoplasmic portion of the chain corresponds to 1656–1665 (IRTLLFALMM). Residues 1666 to 1688 (SLPALFNIGLLLFLVMFIYAIFG) form a helical membrane-spanning segment. Residues 1689–1711 (MSNFAYVKREVGIDDMFNFETFG) lie on the Extracellular side of the membrane. The pore-forming intramembrane region spans 1712–1726 (NSMICLFQITTSAGW). Topologically, residues 1727–1759 (DGLLAPILNSKPPDCDPNKVNPGSSVKGDCGNP) are extracellular. Cys-1741 and Cys-1756 are oxidised to a cystine. The helical transmembrane segment at 1760–1788 (SVGIFFFVSYIIISFLVVVNMYIAVILEN) threads the bilayer. The Cytoplasmic segment spans residues 1789–2009 (FSVATEESAE…EGKDEKAKGK (221 aa)). In terms of domain architecture, IQ spans 1915–1944 (EEVSAVIIQRAYRRHLLKRTVKQASFTYNK). A disordered region spans residues 1986 to 2009 (YDRVTKPIVEKHEQEGKDEKAKGK). Residues 1988-2009 (RVTKPIVEKHEQEGKDEKAKGK) are compositionally biased toward basic and acidic residues.

Belongs to the sodium channel (TC 1.A.1.10) family. Nav1.1/SCN1A subfamily. The Nav1.1 voltage-gated sodium channel consists of an ion-conducting alpha subunit SCN1A which is functional on its own regulated by one or more beta-1 (SCN1B), beta-2 (SCN2B), beta-3 (SCN3B) and beta-4 (SCN4B) subunits. SCN1B and SCN3B are non-covalently associated with SCN1A. SCN2B and SCN4B are disulfide-linked to SCN1A. SCN1B regulates both the expression at the plasma membrane and the voltage dependence of Nav1.1 inactivation. SCN3B and SCN4B reduce Nav1.1 conductance. Probably interacts with TMEM233; modulates the gating properties of NaV1.1. Interacts with FGF13; regulates the steady-state inactivation of Nav.1.1. Phosphorylation at Ser-1516 by PKC in a highly conserved cytoplasmic loop slows inactivation of the sodium channel and reduces peak sodium currents.

Its subcellular location is the cell membrane. It catalyses the reaction Na(+)(in) = Na(+)(out). Activated by the spider toxins Hm1a and Hm1b (H.maculata, AC P60992 and AC P0DOC5) eliciting acute pain and mechanical allodynia. Inhibited by the conotoxin GVIIJ. Functionally, pore-forming subunit of Nav1.1, a voltage-gated sodium (Nav) channel that directly mediates the depolarizing phase of action potentials in excitable membranes. Navs, also called VGSCs (voltage-gated sodium channels) or VDSCs (voltage-dependent sodium channels), operate by switching between closed and open conformations depending on the voltage difference across the membrane. In the open conformation they allow Na(+) ions to selectively pass through the pore, along their electrochemical gradient. The influx of Na(+) ions provokes membrane depolarization, initiating the propagation of electrical signals throughout cells and tissues. By regulating the excitability of neurons, ensures that they respond appropriately to synaptic inputs, maintaining the balance between excitation and inhibition in brain neural circuits. Nav1.1 plays a role in controlling the excitability and action potential propagation from somatosensory neurons, thereby contributing to the sensory perception of mechanically-induced pain. This Rattus norvegicus (Rat) protein is Sodium channel protein type 1 subunit alpha.